Here is a 591-residue protein sequence, read N- to C-terminus: Aspartate--tRNA(Asp/Asn) ligase (591 aa).

Position 170 (glutamate 170) interacts with L-aspartate. The tract at residues 194–197 is aspartate; that stretch reads QLFK. L-aspartate is bound at residue arginine 216. ATP contacts are provided by residues 216–218 and glutamine 225; that span reads RDE. Histidine 448 contacts L-aspartate. Glutamate 482 is an ATP binding site. Arginine 489 contacts L-aspartate. 534-537 provides a ligand contact to ATP; the sequence is GWDR. Residues 559 to 591 are disordered; the sequence is GGVDPLTDAPAPITEQQRKESGIDVKPEPSKPH. A compositionally biased stretch (basic and acidic residues) spans 574 to 591; sequence QQRKESGIDVKPEPSKPH.

It belongs to the class-II aminoacyl-tRNA synthetase family. Type 1 subfamily. In terms of assembly, homodimer.

It localises to the cytoplasm. It carries out the reaction tRNA(Asx) + L-aspartate + ATP = L-aspartyl-tRNA(Asx) + AMP + diphosphate. Its function is as follows. Aspartyl-tRNA synthetase with relaxed tRNA specificity since it is able to aspartylate not only its cognate tRNA(Asp) but also tRNA(Asn). Reaction proceeds in two steps: L-aspartate is first activated by ATP to form Asp-AMP and then transferred to the acceptor end of tRNA(Asp/Asn). This Mycobacterium avium (strain 104) protein is Aspartate--tRNA(Asp/Asn) ligase.